The primary structure comprises 447 residues: Diaminopimelate decarboxylase (447 aa).

K72 is subject to N6-(pyridoxal phosphate)lysine. Pyridoxal 5'-phosphate contacts are provided by residues G258 and 300–303; that span reads EPGR. 3 residues coordinate substrate: R303, R344, and Y348. The active-site Proton donor is the C375. Substrate is bound by residues E376 and Y405. Y405 contacts pyridoxal 5'-phosphate.

Belongs to the Orn/Lys/Arg decarboxylase class-II family. LysA subfamily. As to quaternary structure, homodimer. It depends on pyridoxal 5'-phosphate as a cofactor.

The enzyme catalyses meso-2,6-diaminopimelate + H(+) = L-lysine + CO2. The protein operates within amino-acid biosynthesis; L-lysine biosynthesis via DAP pathway; L-lysine from DL-2,6-diaminopimelate: step 1/1. Functionally, specifically catalyzes the decarboxylation of meso-diaminopimelate (meso-DAP) to L-lysine. The chain is Diaminopimelate decarboxylase from Mycobacterium bovis (strain ATCC BAA-935 / AF2122/97).